We begin with the raw amino-acid sequence, 131 residues long: Aspartate 1-decarboxylase (131 aa).

Ser-25 functions as the Schiff-base intermediate with substrate; via pyruvic acid in the catalytic mechanism. Ser-25 bears the Pyruvic acid (Ser) mark. Thr-57 provides a ligand contact to substrate. The active-site Proton donor is the Tyr-58. 73–75 (GAA) lines the substrate pocket.

The protein belongs to the PanD family. As to quaternary structure, heterooctamer of four alpha and four beta subunits. Pyruvate is required as a cofactor. Post-translationally, is synthesized initially as an inactive proenzyme, which is activated by self-cleavage at a specific serine bond to produce a beta-subunit with a hydroxyl group at its C-terminus and an alpha-subunit with a pyruvoyl group at its N-terminus.

It is found in the cytoplasm. The catalysed reaction is L-aspartate + H(+) = beta-alanine + CO2. It participates in cofactor biosynthesis; (R)-pantothenate biosynthesis; beta-alanine from L-aspartate: step 1/1. Functionally, catalyzes the pyruvoyl-dependent decarboxylation of aspartate to produce beta-alanine. This chain is Aspartate 1-decarboxylase, found in Acaryochloris marina (strain MBIC 11017).